Consider the following 192-residue polypeptide: Xanthine phosphoribosyltransferase (192 aa).

Xanthine-binding residues include Leu20 and Asn27. 128 to 132 (ANGQA) lines the 5-phospho-alpha-D-ribose 1-diphosphate pocket. Position 156 (Lys156) interacts with xanthine.

This sequence belongs to the purine/pyrimidine phosphoribosyltransferase family. Xpt subfamily. As to quaternary structure, homodimer.

It is found in the cytoplasm. The enzyme catalyses XMP + diphosphate = xanthine + 5-phospho-alpha-D-ribose 1-diphosphate. The protein operates within purine metabolism; XMP biosynthesis via salvage pathway; XMP from xanthine: step 1/1. In terms of biological role, converts the preformed base xanthine, a product of nucleic acid breakdown, to xanthosine 5'-monophosphate (XMP), so it can be reused for RNA or DNA synthesis. This is Xanthine phosphoribosyltransferase from Listeria monocytogenes serotype 4b (strain F2365).